Here is a 761-residue protein sequence, read N- to C-terminus: Zinc finger protein 711 (761 aa).

Glycyl lysine isopeptide (Lys-Gly) (interchain with G-Cter in SUMO2) cross-links involve residues Lys224, Lys235, and Lys296. C2H2-type zinc fingers lie at residues 383–408, 414–436, 476–499, 505–527, and 533–556; these read YPCH…HPDH, YQCT…LESH, HKCK…LAVH, HVCV…MRTH, and YQCQ…KSKH. The segment at 562–584 adopts a C2H2-type 6; atypical zinc-finger fold; sequence YKCEHCPQAFGDERELQRHLDLF. 3 residues coordinate Zn(2+): Cys564, Cys567, and His580. 6 consecutive C2H2-type zinc fingers follow at residues 590 to 613, 619 to 641, 647 to 670, 676 to 698, 704 to 727, and 733 to 755; these read HQCP…ISVH, HKCE…SDIH, HQCR…LSVH, LKCK…MKTH, YQCE…ISIH, and HRCE…IMRH.

It belongs to the krueppel C2H2-type zinc-finger protein family. As to quaternary structure, interacts with PHF8.

It localises to the nucleus. Functionally, transcription regulator required for brain development. Probably acts as a transcription factor that binds to the promoter of target genes and recruits PHF8 histone demethylase, leading to activated expression of genes involved in neuron development, such as KDM5C. May compete with transcription factor ARX for activation of expression of KDM5C. In Mus musculus (Mouse), this protein is Zinc finger protein 711 (Znf711).